Here is a 393-residue protein sequence, read N- to C-terminus: Probable acetyl-CoA acyltransferase (393 aa).

C88 (acyl-thioester intermediate) is an active-site residue. Active-site proton acceptor residues include H349 and C378.

It belongs to the thiolase-like superfamily. Thiolase family.

Its subcellular location is the cytoplasm. It catalyses the reaction 2 acetyl-CoA = acetoacetyl-CoA + CoA. This chain is Probable acetyl-CoA acyltransferase, found in Staphylococcus aureus (strain bovine RF122 / ET3-1).